The following is a 603-amino-acid chain: Serine/threonine-protein kinase PLK1 (603 aa).

Residues 1 to 35 (MSAAVTAGKLARAPADPGKAGVPGVAAPGAPAAAP) are disordered. The residue at position 2 (Ser-2) is an N-acetylserine. Thr-6 carries the phosphothreonine modification. The segment covering 13–35 (APADPGKAGVPGVAAPGAPAAAP) has biased composition (low complexity). Lys-19 is covalently cross-linked (Glycyl lysine isopeptide (Lys-Gly) (interchain with G-Cter in ubiquitin)). Residues 53–305 (YVRGRFLGKG…INELLNDEFF (253 aa)) enclose the Protein kinase domain. ATP-binding positions include 59–67 (LGKGGFAKC) and Lys-82. The residue at position 103 (Ser-103) is a Phosphoserine. Glu-131 contacts ATP. Ser-137 is subject to Phosphoserine. Asp-176 serves as the catalytic Proton acceptor. Residues 178-181 (KLGN) and Asp-194 contribute to the ATP site. The interval 194 to 221 (DFGLATKVEYDGERKKTLCGTPNYIAPE) is activation loop. Thr-210 bears the Phosphothreonine; by AURKA mark. Thr-214 carries the phosphothreonine modification. At Ser-269 the chain carries Phosphoserine; by autocatalysis. Ser-335 is modified (phosphoserine). Residues 337–340 (RKPL) carry the D-box that targets the protein for proteasomal degradation in anaphase motif. Lys-338 is covalently cross-linked (Glycyl lysine isopeptide (Lys-Gly) (interchain with G-Cter in SUMO2)). The disordered stretch occupies residues 338–364 (KPLTVLNKGLENPLPERPREKEEPVVR). Positions 351–364 (LPERPREKEEPVVR) are enriched in basic and acidic residues. Ser-375 and Ser-450 each carry phosphoserine. In terms of domain architecture, POLO box 1 spans 410-488 (WVSKWVDYSD…LKYFRNYMSE (79 aa)). Lys-492 participates in a covalent cross-link: Glycyl lysine isopeptide (Lys-Gly) (interchain with G-Cter in ubiquitin). The linker stretch occupies residues 493–507 (AGANITPREGDELAR). Phosphothreonine is present on Thr-498. In terms of domain architecture, POLO box 2 spans 510-592 (YLRTWFRTRS…ARTMVDKLLS (83 aa)). An important for interaction with phosphorylated proteins region spans residues 538-540 (HTK).

This sequence belongs to the protein kinase superfamily. Ser/Thr protein kinase family. CDC5/Polo subfamily. Interacts with CEP170. Interacts with EVI5. Interacts with FAM29A. Interacts with SLX4/BTBD12. Interacts with TTDN1. Interacts (via POLO-box domain) with the phosphorylated form of BUB1, CDC25C and CENPU. Interacts with KIF2A. Interacts with CYLD. Part of an astrin (SPAG5)-kinastrin (SKAP) complex containing KNSTRN, SPAG5, PLK1, DYNLL1 and SGO2. Interacts with BIRC6/bruce. Interacts with CDK1-phosphorylated FRY; this interaction occurs in mitotic cells, but not in interphase cells. FRY interaction facilitates AURKA-mediated PLK1 phosphorylation. Interacts with CDK1-phosphorylated DCTN6 during mitotic prometaphase; the interaction facilitates recruitment to kinetochores. Interacts with CEP68; the interaction phosphorylates CEP68. Interacts (via POLO-box domain) with DCTN1. Interacts with CEP20 in later G1, S, G2 and M phases of the cell cycle; this interaction recruits PLK1 to centrosomes, a step required for S phase progression. Interacts with KLHL22. Interacts (via POLO box domains) with NEDD9/HEF1 (via C-terminus). Interacts with FIRRM (via N-terminus region); required for maintaining, but not activating, PLK1 kinase activity. Interacts with FZR1. Interacts with SKA3; the interaction promotes the stability of PLK1; the interaction promotes the stability of PLK1. Interacts with the MTMR3:MTMR4 heterooligomer; brings CEP55 and PLK1 together during early mitosis, regulating the phosphorylation of CEP55 by PLK1 and its recruitment to the midbody where it can mediate cell abscission. In terms of processing, catalytic activity is enhanced by phosphorylation of Thr-210. Phosphorylation at Thr-210 is first detected on centrosomes in the G2 phase of the cell cycle, peaks in prometaphase and gradually disappears from centrosomes during anaphase. Dephosphorylation at Thr-210 at centrosomes is probably mediated by protein phosphatase 1C (PP1C), via interaction with PPP1R12A/MYPT1. Autophosphorylation and phosphorylation of Ser-137 may not be significant for the activation of PLK1 during mitosis, but may enhance catalytic activity during recovery after DNA damage checkpoint. Phosphorylated in vitro by STK10. Ubiquitinated by the anaphase promoting complex/cyclosome (APC/C) in anaphase and following DNA damage, leading to its degradation by the proteasome. Ubiquitination is mediated via its interaction with FZR1/CDH1. Ubiquitination and subsequent degradation prevents entry into mitosis and is essential to maintain an efficient G2 DNA damage checkpoint. Monoubiquitination at Lys-492 by the BCR(KLHL22) ubiquitin ligase complex does not lead to degradation: it promotes PLK1 dissociation from phosphoreceptor proteins and subsequent removal from kinetochores, allowing silencing of the spindle assembly checkpoint (SAC) and chromosome segregation. Placenta and colon.

The protein resides in the nucleus. Its subcellular location is the chromosome. It is found in the centromere. The protein localises to the kinetochore. It localises to the cytoplasm. The protein resides in the cytoskeleton. Its subcellular location is the microtubule organizing center. It is found in the centrosome. The protein localises to the spindle. It localises to the midbody. It carries out the reaction L-seryl-[protein] + ATP = O-phospho-L-seryl-[protein] + ADP + H(+). The catalysed reaction is L-threonyl-[protein] + ATP = O-phospho-L-threonyl-[protein] + ADP + H(+). With respect to regulation, activated by phosphorylation of Thr-210 by AURKA; phosphorylation by AURKA is enhanced by BORA. Once activated, activity is stimulated by binding target proteins. Binding of target proteins has no effect on the non-activated kinase. Several inhibitors targeting PLKs are currently in development and are under investigation in a growing number of clinical trials, such as BI 2536, an ATP-competitive PLK1 inhibitor or BI 6727, a dihydropteridinone that specifically inhibits the catalytic activity of PLK1. Functionally, serine/threonine-protein kinase that performs several important functions throughout M phase of the cell cycle, including the regulation of centrosome maturation and spindle assembly, the removal of cohesins from chromosome arms, the inactivation of anaphase-promoting complex/cyclosome (APC/C) inhibitors, and the regulation of mitotic exit and cytokinesis. Polo-like kinase proteins act by binding and phosphorylating proteins that are already phosphorylated on a specific motif recognized by the POLO box domains. Phosphorylates BORA, BUB1B/BUBR1, CCNB1, CDC25C, CEP55, ECT2, ERCC6L, FBXO5/EMI1, FOXM1, KIF20A/MKLP2, CENPU, NEDD1, NINL, NPM1, NUDC, PKMYT1/MYT1, KIZ, MRE11, PPP1R12A/MYPT1, POLQ, PRC1, RACGAP1/CYK4, RAD51, RHNO1, SGO1, STAG2/SA2, TEX14, TOPORS, p73/TP73, TPT1, WEE1 and HNRNPU. Plays a key role in centrosome functions and the assembly of bipolar spindles by phosphorylating KIZ, NEDD1 and NINL. NEDD1 phosphorylation promotes subsequent targeting of the gamma-tubulin ring complex (gTuRC) to the centrosome, an important step for spindle formation. Phosphorylation of NINL component of the centrosome leads to NINL dissociation from other centrosomal proteins. Involved in mitosis exit and cytokinesis by phosphorylating CEP55, ECT2, KIF20A/MKLP2, CENPU, PRC1 and RACGAP1. Recruited at the central spindle by phosphorylating and docking PRC1 and KIF20A/MKLP2; creates its own docking sites on PRC1 and KIF20A/MKLP2 by mediating phosphorylation of sites subsequently recognized by the POLO box domains. Phosphorylates RACGAP1, thereby creating a docking site for the Rho GTP exchange factor ECT2 that is essential for the cleavage furrow formation. Promotes the central spindle recruitment of ECT2. Plays a central role in G2/M transition of mitotic cell cycle by phosphorylating CCNB1, CDC25C, FOXM1, CENPU, PKMYT1/MYT1, PPP1R12A/MYPT1 and WEE1. Part of a regulatory circuit that promotes the activation of CDK1 by phosphorylating the positive regulator CDC25C and inhibiting the negative regulators WEE1 and PKMYT1/MYT1. Also acts by mediating phosphorylation of cyclin-B1 (CCNB1) on centrosomes in prophase. Phosphorylates FOXM1, a key mitotic transcription regulator, leading to enhance FOXM1 transcriptional activity. Involved in kinetochore functions and sister chromatid cohesion by phosphorylating BUB1B/BUBR1, FBXO5/EMI1 and STAG2/SA2. PLK1 is high on non-attached kinetochores suggesting a role of PLK1 in kinetochore attachment or in spindle assembly checkpoint (SAC) regulation. Required for kinetochore localization of BUB1B. Regulates the dissociation of cohesin from chromosomes by phosphorylating cohesin subunits such as STAG2/SA2. Phosphorylates SGO1: required for spindle pole localization of isoform 3 of SGO1 and plays a role in regulating its centriole cohesion function. Mediates phosphorylation of FBXO5/EMI1, a negative regulator of the APC/C complex during prophase, leading to FBXO5/EMI1 ubiquitination and degradation by the proteasome. Acts as a negative regulator of p53 family members: phosphorylates TOPORS, leading to inhibit the sumoylation of p53/TP53 and simultaneously enhance the ubiquitination and subsequent degradation of p53/TP53. Phosphorylates the transactivation domain of the transcription factor p73/TP73, leading to inhibit p73/TP73-mediated transcriptional activation and pro-apoptotic functions. Phosphorylates BORA, and thereby promotes the degradation of BORA. Contributes to the regulation of AURKA function. Also required for recovery after DNA damage checkpoint and entry into mitosis. Phosphorylates MISP, leading to stabilization of cortical and astral microtubule attachments required for proper spindle positioning. Together with MEIKIN, acts as a regulator of kinetochore function during meiosis I: required both for mono-orientation of kinetochores on sister chromosomes and protection of centromeric cohesin from separase-mediated cleavage. Phosphorylates CEP68 and is required for its degradation. Regulates nuclear envelope breakdown during prophase by phosphorylating DCTN1 resulting in its localization in the nuclear envelope. Phosphorylates the heat shock transcription factor HSF1, promoting HSF1 nuclear translocation upon heat shock. Phosphorylates HSF1 also in the early mitotic period; this phosphorylation regulates HSF1 localization to the spindle pole, the recruitment of the SCF(BTRC) ubiquitin ligase complex induicing HSF1 degradation, and hence mitotic progression. Regulates mitotic progression by phosphorylating RIOK2. Through the phosphorylation of DZIP1 regulates the localization during mitosis of the BBSome, a ciliary protein complex involved in cilium biogenesis. Regulates DNA repair during mitosis by mediating phosphorylation of POLQ and RHNO1, thereby promoting POLQ recruitment to DNA damage sites. Phosphorylates ATXN10 which may play a role in the regulation of cytokinesis and may stimulate the proteasome-mediated degradation of ATXN10. The protein is Serine/threonine-protein kinase PLK1 (PLK1) of Homo sapiens (Human).